A 342-amino-acid polypeptide reads, in one-letter code: Tetraacyldisaccharide 4'-kinase (342 aa).

68-75 (TVGGTGKT) lines the ATP pocket.

This sequence belongs to the LpxK family.

It catalyses the reaction a lipid A disaccharide + ATP = a lipid IVA + ADP + H(+). Its pathway is glycolipid biosynthesis; lipid IV(A) biosynthesis; lipid IV(A) from (3R)-3-hydroxytetradecanoyl-[acyl-carrier-protein] and UDP-N-acetyl-alpha-D-glucosamine: step 6/6. Transfers the gamma-phosphate of ATP to the 4'-position of a tetraacyldisaccharide 1-phosphate intermediate (termed DS-1-P) to form tetraacyldisaccharide 1,4'-bis-phosphate (lipid IVA). The protein is Tetraacyldisaccharide 4'-kinase of Burkholderia pseudomallei (strain K96243).